Reading from the N-terminus, the 505-residue chain is Aspartyl/glutamyl-tRNA(Asn/Gln) amidotransferase subunit B (505 aa).

A disordered region spans residues N220–E241.

The protein belongs to the GatB/GatE family. GatB subfamily. As to quaternary structure, heterotrimer of A, B and C subunits.

It carries out the reaction L-glutamyl-tRNA(Gln) + L-glutamine + ATP + H2O = L-glutaminyl-tRNA(Gln) + L-glutamate + ADP + phosphate + H(+). The enzyme catalyses L-aspartyl-tRNA(Asn) + L-glutamine + ATP + H2O = L-asparaginyl-tRNA(Asn) + L-glutamate + ADP + phosphate + 2 H(+). Its function is as follows. Allows the formation of correctly charged Asn-tRNA(Asn) or Gln-tRNA(Gln) through the transamidation of misacylated Asp-tRNA(Asn) or Glu-tRNA(Gln) in organisms which lack either or both of asparaginyl-tRNA or glutaminyl-tRNA synthetases. The reaction takes place in the presence of glutamine and ATP through an activated phospho-Asp-tRNA(Asn) or phospho-Glu-tRNA(Gln). The protein is Aspartyl/glutamyl-tRNA(Asn/Gln) amidotransferase subunit B of Frankia casuarinae (strain DSM 45818 / CECT 9043 / HFP020203 / CcI3).